The chain runs to 89 residues: Cell division topological specificity factor (89 aa).

This sequence belongs to the MinE family.

Its function is as follows. Prevents the cell division inhibition by proteins MinC and MinD at internal division sites while permitting inhibition at polar sites. This ensures cell division at the proper site by restricting the formation of a division septum at the midpoint of the long axis of the cell. In Proteus mirabilis (strain HI4320), this protein is Cell division topological specificity factor.